The primary structure comprises 393 residues: NAD(P)H-quinone oxidoreductase subunit H, chloroplastic (393 aa).

The protein belongs to the complex I 49 kDa subunit family. In terms of assembly, NDH is composed of at least 16 different subunits, 5 of which are encoded in the nucleus.

It is found in the plastid. It localises to the chloroplast thylakoid membrane. The enzyme catalyses a plastoquinone + NADH + (n+1) H(+)(in) = a plastoquinol + NAD(+) + n H(+)(out). It catalyses the reaction a plastoquinone + NADPH + (n+1) H(+)(in) = a plastoquinol + NADP(+) + n H(+)(out). Functionally, NDH shuttles electrons from NAD(P)H:plastoquinone, via FMN and iron-sulfur (Fe-S) centers, to quinones in the photosynthetic chain and possibly in a chloroplast respiratory chain. The immediate electron acceptor for the enzyme in this species is believed to be plastoquinone. Couples the redox reaction to proton translocation, and thus conserves the redox energy in a proton gradient. This Vitis vinifera (Grape) protein is NAD(P)H-quinone oxidoreductase subunit H, chloroplastic.